The primary structure comprises 376 residues: Erythronate-4-phosphate dehydrogenase (376 aa).

Residues Ser45 and Thr67 each contribute to the substrate site. Asp147 lines the NAD(+) pocket. Arg209 is a catalytic residue. Position 233 (Asp233) interacts with NAD(+). The active site involves Glu238. Residue His255 is the Proton donor of the active site. Gly258 is an NAD(+) binding site. Tyr259 serves as a coordination point for substrate.

It belongs to the D-isomer specific 2-hydroxyacid dehydrogenase family. PdxB subfamily. As to quaternary structure, homodimer.

It is found in the cytoplasm. The catalysed reaction is 4-phospho-D-erythronate + NAD(+) = (R)-3-hydroxy-2-oxo-4-phosphooxybutanoate + NADH + H(+). The protein operates within cofactor biosynthesis; pyridoxine 5'-phosphate biosynthesis; pyridoxine 5'-phosphate from D-erythrose 4-phosphate: step 2/5. In terms of biological role, catalyzes the oxidation of erythronate-4-phosphate to 3-hydroxy-2-oxo-4-phosphonooxybutanoate. This chain is Erythronate-4-phosphate dehydrogenase, found in Shewanella loihica (strain ATCC BAA-1088 / PV-4).